The chain runs to 930 residues: APC membrane recruitment protein 1 (930 aa).

Disordered regions lie at residues 1–33, 55–76, 104–133, 161–193, 222–245, and 366–454; these read MEIA…PPSV, FFGG…TKSQ, CSEP…LFSS, TVPG…NQTT, EMDK…RQEG, and EVCY…PRDS. Basic and acidic residues predominate over residues 222 to 242; it reads EMDKRRRAEEEGIGEDEKTGR. Polar residues-rich tracts occupy residues 377–399 and 413–424; these read DSPS…SSPM and SPQSDRQESVPN. A compositionally biased stretch (basic and acidic residues) spans 439 to 452; the sequence is EESRERPHQERLPR.

This sequence belongs to the Amer family.

The protein localises to the cytoplasm. Its subcellular location is the cell membrane. It is found in the nucleus. Regulator of the canonical Wnt signaling pathway. Acts by specifically binding phosphatidylinositol 4,5-bisphosphate (PtdIns(4,5)P2), translocating to the cell membrane and interacting with key regulators of the canonical Wnt signaling pathway, such as components of the beta-catenin destruction complex. Acts both as a positive and negative regulator of the Wnt signaling pathway, depending on the context. The polypeptide is APC membrane recruitment protein 1 (amer1) (Danio rerio (Zebrafish)).